We begin with the raw amino-acid sequence, 207 residues long: Dephospho-CoA kinase (207 aa).

Residues 10 to 207 (ILGLTGGIGS…FYLTLKGGQP (198 aa)) enclose the DPCK domain. 18-23 (GSGKSA) contributes to the ATP binding site.

It belongs to the CoaE family.

It localises to the cytoplasm. The catalysed reaction is 3'-dephospho-CoA + ATP = ADP + CoA + H(+). It functions in the pathway cofactor biosynthesis; coenzyme A biosynthesis; CoA from (R)-pantothenate: step 5/5. Its function is as follows. Catalyzes the phosphorylation of the 3'-hydroxyl group of dephosphocoenzyme A to form coenzyme A. The polypeptide is Dephospho-CoA kinase (Pseudomonas putida (strain ATCC 47054 / DSM 6125 / CFBP 8728 / NCIMB 11950 / KT2440)).